We begin with the raw amino-acid sequence, 581 residues long: Pyridine nucleotide-disulfide oxidoreductase domain-containing protein 2 (581 aa).

Residue 38–71 (VVIGAGHNGLVVAAYLQRLGVNTAVFERRHVIGG) participates in FAD binding.

It belongs to the carotenoid/retinoid oxidoreductase family. As to quaternary structure, interacts with COX5B; this interaction may contribute to localize PYROXD2 to the inner face of the inner mitochondrial membrane.

It localises to the mitochondrion matrix. Probable oxidoreductase that may play a role as regulator of mitochondrial function. In Pongo abelii (Sumatran orangutan), this protein is Pyridine nucleotide-disulfide oxidoreductase domain-containing protein 2.